Here is an 889-residue protein sequence, read N- to C-terminus: Chitin synthase I (889 aa).

Asparagine 43 is a glycosylation site (N-linked (GlcNAc...) asparagine). Positions 94–138 (GEYFDGYNQGHPPQEHQAYDDDGQPLIEDQHGYSDNPQHQTQTPA) are disordered. A compositionally biased stretch (polar residues) spans 126-137 (YSDNPQHQTQTP). Asparagine 199 carries N-linked (GlcNAc...) asparagine glycosylation. Helical transmembrane passes span 431 to 451 (SAFG…YVAL), 530 to 550 (RWLN…YEFF), 560 to 580 (LAFF…WFAI), 606 to 626 (ILGV…FVLS), 641 to 661 (MVWF…FIAV), 687 to 707 (TLII…IIMF), 716 to 736 (FIQY…YAFC), 815 to 835 (GVVL…LSSA), and 861 to 881 (IVLW…MWFL).

It belongs to the chitin synthase family. Class I subfamily. As to expression, expressed in hyphal bodies.

It localises to the cell membrane. It catalyses the reaction [(1-&gt;4)-N-acetyl-beta-D-glucosaminyl](n) + UDP-N-acetyl-alpha-D-glucosamine = [(1-&gt;4)-N-acetyl-beta-D-glucosaminyl](n+1) + UDP + H(+). Its function is as follows. Polymerizes chitin, a structural polymer of the cell wall and septum, by transferring the sugar moiety of UDP-GlcNAc to the non-reducing end of the growing chitin polymer. Contributes to the production of conidia and the ability of fungal conidia to germinate. Not involved in fungal stress tolerances. The polypeptide is Chitin synthase I (Metarhizium acridum (strain CQMa 102)).